The chain runs to 392 residues: S-adenosylmethionine synthase (392 aa).

Residue His17 coordinates ATP. Residue Asp19 coordinates Mg(2+). K(+) is bound at residue Glu45. 2 residues coordinate L-methionine: Glu58 and Gln102. The segment at 102 to 112 (QSADIAQGVDA) is flexible loop. ATP contacts are provided by residues 169 to 171 (DAK), 235 to 236 (KF), Asp244, 250 to 251 (RK), Ala267, and Lys271. Residue Asp244 participates in L-methionine binding. Lys275 provides a ligand contact to L-methionine.

Belongs to the AdoMet synthase family. As to quaternary structure, homotetramer; dimer of dimers. Requires Mg(2+) as cofactor. The cofactor is K(+).

It is found in the cytoplasm. The catalysed reaction is L-methionine + ATP + H2O = S-adenosyl-L-methionine + phosphate + diphosphate. It functions in the pathway amino-acid biosynthesis; S-adenosyl-L-methionine biosynthesis; S-adenosyl-L-methionine from L-methionine: step 1/1. In terms of biological role, catalyzes the formation of S-adenosylmethionine (AdoMet) from methionine and ATP. The overall synthetic reaction is composed of two sequential steps, AdoMet formation and the subsequent tripolyphosphate hydrolysis which occurs prior to release of AdoMet from the enzyme. The sequence is that of S-adenosylmethionine synthase from Methylobacterium sp. (strain 4-46).